Consider the following 766-residue polypeptide: Polyribonucleotide nucleotidyltransferase (766 aa).

Aspartate 490 and aspartate 496 together coordinate Mg(2+). In terms of domain architecture, KH spans 557 to 616; sequence PKIDTITIPVDKIKVVIGKGGEQIDKIIAETGVKIDIDDEGLCSIFSSDQSAIDRAKEII. Positions 626–694 constitute an S1 motif domain; that stretch reads GEVYEAKVVR…DKGRVDASMR (69 aa). 2 stretches are compositionally biased toward basic and acidic residues: residues 700–734 and 744–766; these read PEGYVEPERKPRERRDNKDRRNGNGFDRRNNDRNN and FELRERKSHVDHEFPELSTKKPE. A disordered region spans residues 700-766; that stretch reads PEGYVEPERK…FPELSTKKPE (67 aa).

This sequence belongs to the polyribonucleotide nucleotidyltransferase family. Mg(2+) serves as cofactor.

The protein localises to the cytoplasm. The catalysed reaction is RNA(n+1) + phosphate = RNA(n) + a ribonucleoside 5'-diphosphate. Functionally, involved in mRNA degradation. Catalyzes the phosphorolysis of single-stranded polyribonucleotides processively in the 3'- to 5'-direction. The polypeptide is Polyribonucleotide nucleotidyltransferase (Lactococcus lactis subsp. cremoris (strain MG1363)).